The primary structure comprises 360 residues: Homoserine O-succinyltransferase (360 aa).

Cysteine 146 acts as the Acyl-thioester intermediate in catalysis. Residues lysine 167 and serine 196 each coordinate substrate. Histidine 239 acts as the Proton acceptor in catalysis. Residue glutamate 241 is part of the active site. Position 253 (arginine 253) interacts with substrate.

The protein belongs to the MetA family.

It localises to the cytoplasm. It catalyses the reaction L-homoserine + succinyl-CoA = O-succinyl-L-homoserine + CoA. The protein operates within amino-acid biosynthesis; L-methionine biosynthesis via de novo pathway; O-succinyl-L-homoserine from L-homoserine: step 1/1. Functionally, transfers a succinyl group from succinyl-CoA to L-homoserine, forming succinyl-L-homoserine. In vitro, can also use glutaryl-CoA as acyl donor. The polypeptide is Homoserine O-succinyltransferase (Thiothrix nivea (strain ATCC 35100 / DSM 5205 / JP2)).